Consider the following 445-residue polypeptide: Tubulin beta chain (445 aa).

GTP is bound by residues Gln-11, Glu-69, Ser-138, Gly-142, Thr-143, Gly-144, Asn-204, and Asn-226. Glu-69 serves as a coordination point for Mg(2+).

This sequence belongs to the tubulin family. Dimer of alpha and beta chains. A typical microtubule is a hollow water-filled tube with an outer diameter of 25 nm and an inner diameter of 15 nM. Alpha-beta heterodimers associate head-to-tail to form protofilaments running lengthwise along the microtubule wall with the beta-tubulin subunit facing the microtubule plus end conferring a structural polarity. Microtubules usually have 13 protofilaments but different protofilament numbers can be found in some organisms and specialized cells. Mg(2+) serves as cofactor.

It localises to the cytoplasm. The protein resides in the cytoskeleton. Its function is as follows. Tubulin is the major constituent of microtubules, a cylinder consisting of laterally associated linear protofilaments composed of alpha- and beta-tubulin heterodimers. Microtubules grow by the addition of GTP-tubulin dimers to the microtubule end, where a stabilizing cap forms. Below the cap, tubulin dimers are in GDP-bound state, owing to GTPase activity of alpha-tubulin. The polypeptide is Tubulin beta chain (Coprinopsis cinerea (strain Okayama-7 / 130 / ATCC MYA-4618 / FGSC 9003) (Inky cap fungus)).